The sequence spans 109 residues: Large ribosomal subunit protein uL22 (109 aa).

This sequence belongs to the universal ribosomal protein uL22 family. As to quaternary structure, part of the 50S ribosomal subunit.

This protein binds specifically to 23S rRNA; its binding is stimulated by other ribosomal proteins, e.g. L4, L17, and L20. It is important during the early stages of 50S assembly. It makes multiple contacts with different domains of the 23S rRNA in the assembled 50S subunit and ribosome. Its function is as follows. The globular domain of the protein is located near the polypeptide exit tunnel on the outside of the subunit, while an extended beta-hairpin is found that lines the wall of the exit tunnel in the center of the 70S ribosome. This is Large ribosomal subunit protein uL22 from Polynucleobacter asymbioticus (strain DSM 18221 / CIP 109841 / QLW-P1DMWA-1) (Polynucleobacter necessarius subsp. asymbioticus).